The chain runs to 130 residues: Small ribosomal subunit protein eS6 (130 aa).

The segment at 78-98 is disordered; it reads SGPPGFRPERKGERRRKTVRG.

Belongs to the eukaryotic ribosomal protein eS6 family.

The sequence is that of Small ribosomal subunit protein eS6 from Methanopyrus kandleri (strain AV19 / DSM 6324 / JCM 9639 / NBRC 100938).